A 63-amino-acid polypeptide reads, in one-letter code: Large ribosomal subunit protein bL28 (63 aa).

This sequence belongs to the bacterial ribosomal protein bL28 family.

In Citrifermentans bemidjiense (strain ATCC BAA-1014 / DSM 16622 / JCM 12645 / Bem) (Geobacter bemidjiensis), this protein is Large ribosomal subunit protein bL28.